The primary structure comprises 174 residues: ATP-dependent protease subunit HslV (174 aa).

The active site involves T4. The Na(+) site is built by A159, C162, and T165.

It belongs to the peptidase T1B family. HslV subfamily. As to quaternary structure, a double ring-shaped homohexamer of HslV is capped on each side by a ring-shaped HslU homohexamer. The assembly of the HslU/HslV complex is dependent on binding of ATP.

The protein localises to the cytoplasm. It carries out the reaction ATP-dependent cleavage of peptide bonds with broad specificity.. Its activity is regulated as follows. Allosterically activated by HslU binding. Its function is as follows. Protease subunit of a proteasome-like degradation complex believed to be a general protein degrading machinery. The polypeptide is ATP-dependent protease subunit HslV (Moorella thermoacetica (strain ATCC 39073 / JCM 9320)).